We begin with the raw amino-acid sequence, 208 residues long: Germin-like protein subfamily 3 member 1 (208 aa).

The N-terminal stretch at 1–18 is a signal peptide; the sequence is MLRTIFLLSLLFALSNAS. A disulfide bridge connects residues Cys23 and Cys38. The region spanning 52-198 is the Cupin type-1 domain; that stretch reads SGLGTPGNTT…TTFLDATTVK (147 aa). Asn59 carries an N-linked (GlcNAc...) asparagine glycan. Residues His100, His102, Glu107, and His146 each coordinate Mn(2+).

This sequence belongs to the germin family. As to quaternary structure, may not form oligomer. In terms of tissue distribution, expressed during germination, and also in green shoots, etiolated seedlings and whole seedlings.

It is found in the secreted. The protein resides in the extracellular space. Its subcellular location is the apoplast. Functionally, may play a role in plant defense. Probably has no oxalate oxidase activity even if the active site is conserved. This Arabidopsis thaliana (Mouse-ear cress) protein is Germin-like protein subfamily 3 member 1 (GLP1).